We begin with the raw amino-acid sequence, 370 residues long: Putative agmatine deiminase (370 aa).

Cys-361 serves as the catalytic Amidino-cysteine intermediate.

Belongs to the agmatine deiminase family.

The enzyme catalyses agmatine + H2O = N-carbamoylputrescine + NH4(+). The sequence is that of Putative agmatine deiminase from Shewanella sp. (strain MR-4).